The following is a 333-amino-acid chain: MTTPNKINFPPPKLQIDFAFALKRFRAVYLQSALLETVRDMDIAELDRQLSKYVPPADLATLAQYGLRAELLFAVPAVLEANPHLLGYYRLLMGYSQKEFYGRDKGFGVGCFKSMEEKGKAGKAAVADLHDLCVAFCATASALLAGVGPLRVSRELLDDLTLLTVGPQLRGGANNQRGADGIVLVFEIIREIVAHAAAEVRESAIEVNSATGRPVLIEFAPDPDIIIREEMENQHYRNVVAIEVKSGTDVSNIHNRIGEAEKSHQKARQLGFTECWTVVNVGRLDMVKARSESPSTDRFYSLTALSLRAGDEYADFRRRVLSLTAIPARPANP.

Belongs to the XcyI type II restriction endonuclease family. In terms of assembly, monomer. It depends on Mg(2+) as a cofactor.

It carries out the reaction Endonucleolytic cleavage of DNA to give specific double-stranded fragments with terminal 5'-phosphates.. A P subtype restriction enzyme that recognizes the double-stranded sequence 5'-CCCGGG-3' and cleaves after C-1. The protein is Type II restriction enzyme XcyI (xcyIR) of Xanthomonas campestris pv. cyanopsidis.